Consider the following 555-residue polypeptide: Dihydroxy-acid dehydratase (555 aa).

D80 is a Mg(2+) binding site. Residue C121 participates in [2Fe-2S] cluster binding. 2 residues coordinate Mg(2+): D122 and K123. N6-carboxylysine is present on K123. C193 serves as a coordination point for [2Fe-2S] cluster. Residue E444 participates in Mg(2+) binding. S470 (proton acceptor) is an active-site residue.

It belongs to the IlvD/Edd family. As to quaternary structure, homodimer. [2Fe-2S] cluster is required as a cofactor. Requires Mg(2+) as cofactor.

The enzyme catalyses (2R)-2,3-dihydroxy-3-methylbutanoate = 3-methyl-2-oxobutanoate + H2O. The catalysed reaction is (2R,3R)-2,3-dihydroxy-3-methylpentanoate = (S)-3-methyl-2-oxopentanoate + H2O. It functions in the pathway amino-acid biosynthesis; L-isoleucine biosynthesis; L-isoleucine from 2-oxobutanoate: step 3/4. It participates in amino-acid biosynthesis; L-valine biosynthesis; L-valine from pyruvate: step 3/4. In terms of biological role, functions in the biosynthesis of branched-chain amino acids. Catalyzes the dehydration of (2R,3R)-2,3-dihydroxy-3-methylpentanoate (2,3-dihydroxy-3-methylvalerate) into 2-oxo-3-methylpentanoate (2-oxo-3-methylvalerate) and of (2R)-2,3-dihydroxy-3-methylbutanoate (2,3-dihydroxyisovalerate) into 2-oxo-3-methylbutanoate (2-oxoisovalerate), the penultimate precursor to L-isoleucine and L-valine, respectively. In Aquifex aeolicus (strain VF5), this protein is Dihydroxy-acid dehydratase.